Here is a 644-residue protein sequence, read N- to C-terminus: Transmembrane 9 superfamily member 9 (644 aa).

The N-terminal stretch at M1–S27 is a signal peptide. The Lumenal segment spans residues F28–H281. Residues W282–I302 form a helical membrane-spanning segment. The Cytoplasmic portion of the chain corresponds to M303 to G351. A helical transmembrane segment spans residues T352–L372. Topologically, residues S373–R377 are lumenal. A helical membrane pass occupies residues G378–A398. Over S399–T418 the chain is Cytoplasmic. Residues A419–G439 form a helical membrane-spanning segment. Residues Q440–M451 lie on the Lumenal side of the membrane. A helical membrane pass occupies residues F452–L472. Residues G473–P501 are Cytoplasmic-facing. The helical transmembrane segment at I502–F522 threads the bilayer. The Lumenal segment spans residues I523 to Y534. A helical membrane pass occupies residues I535 to I555. Residues V556 to S573 lie on the Cytoplasmic side of the membrane. Residues Y574–T594 form a helical membrane-spanning segment. Topologically, residues K595–K600 are lumenal. The helical transmembrane segment at L601–L621 threads the bilayer. At T622–D644 the chain is on the cytoplasmic side. Residues F633–Y638 carry the Endoplasmic reticulum export signal motif. A Golgi retention signal motif is present at residues K642–D644.

It belongs to the nonaspanin (TM9SF) (TC 9.A.2) family.

It is found in the endosome membrane. The protein resides in the golgi apparatus membrane. This is Transmembrane 9 superfamily member 9 from Arabidopsis thaliana (Mouse-ear cress).